The following is an 812-amino-acid chain: Phospholipase D alpha 2 (812 aa).

Positions 1–36 (MAQHLLHGTLHATIYEVDALHTGGLRSAGFLGKIIS) are excised as a propeptide. The C2 domain maps to 1-127 (MAQHLLHGTL…INGEEVEKWV (127 aa)). One can recognise a PLD phosphodiesterase 1 domain in the interval 328 to 368 (AMFTHHQKIVVVDSEVPSQGGGSEMRRIMSFVGGIDLCDGR). Catalysis depends on residues His333, Lys335, and Asp340. Position 333 (His333) interacts with a 1,2-diacyl-sn-glycero-3-phosphate. His374 provides a ligand contact to Ca(2+). 2 residues coordinate a 1,2-diacyl-sn-glycero-3-phosphate: Gln524 and His663. The region spanning 658–685 (FMIYVHSKMMIVDDEYIIVGSANINQRS) is the PLD phosphodiesterase 2 domain. Residues His663, Lys665, and Asp670 contribute to the active site. Residue Glu724 coordinates Ca(2+).

It belongs to the phospholipase D family. C2-PLD subfamily. Ca(2+) serves as cofactor.

The protein resides in the cytoplasm. The protein localises to the membrane. The enzyme catalyses a 1,2-diacyl-sn-glycero-3-phosphocholine + H2O = a 1,2-diacyl-sn-glycero-3-phosphate + choline + H(+). In terms of biological role, hydrolyzes glycerol-phospholipids at the terminal phosphodiesteric bond. Plays an important role in various cellular processes, including phytohormone action, vesicular trafficking, secretion, cytoskeletal arrangement, meiosis, tumor promotion, pathogenesis, membrane deterioration and senescence. The protein is Phospholipase D alpha 2 (PLD2) of Brassica oleracea var. capitata (Cabbage).